The sequence spans 394 residues: NAC domain-containing protein 3 (394 aa).

Residues 3 to 147 enclose the NAC domain; it reads TPVGLRFCPT…TYTLCKVMFN (145 aa). The DNA-binding element occupies 104–153; the sequence is IGEKKILMFYTSKESKSDWVIHEYHGFSHNQMMMTYTLCKVMFNGGMREK. Disordered regions lie at residues 152 to 173 and 264 to 300; these read EKSS…RRDS and NSLT…CDSF. The span at 155–165 shows a compositional bias: low complexity; it reads SSSPSSSGVSG. Residues 286–300 are compositionally biased toward polar residues; sequence PKTNSIQTSSTCDSF.

The protein localises to the nucleus. The polypeptide is NAC domain-containing protein 3 (NAC003) (Arabidopsis thaliana (Mouse-ear cress)).